The following is a 440-amino-acid chain: tRNA(Ile)-lysidine synthase (440 aa).

19 to 24 (SGGLDS) provides a ligand contact to ATP.

The protein belongs to the tRNA(Ile)-lysidine synthase family.

The protein localises to the cytoplasm. The enzyme catalyses cytidine(34) in tRNA(Ile2) + L-lysine + ATP = lysidine(34) in tRNA(Ile2) + AMP + diphosphate + H(+). In terms of biological role, ligates lysine onto the cytidine present at position 34 of the AUA codon-specific tRNA(Ile) that contains the anticodon CAU, in an ATP-dependent manner. Cytidine is converted to lysidine, thus changing the amino acid specificity of the tRNA from methionine to isoleucine. This is tRNA(Ile)-lysidine synthase from Buchnera aphidicola subsp. Acyrthosiphon pisum (strain APS) (Acyrthosiphon pisum symbiotic bacterium).